Reading from the N-terminus, the 255-residue chain is MSIRVIIAGFKGKMGQAACQMVLTDPDLDLVAVLDPFESESEWQDIPVFKDKADLAGFEADVWVDFTTPAVAYENTRFALENGFAPVVGTTGFTSEEIAELKEFSRAQDLGGLIAPNFALGAVLLMQFATQAAKYFPNVEIIELHHDKKKDAPSGTAIKTAELMAEVRESIQQGAADEEELIAGARGADFDGMRIHSVRLPGLVAHQEVIFGNQGEGLTLRHDSYDRISFMTGVNLGIKEVVKRHELVYGLEHLL.

Residues Gly9–Met14, Asp35, Gly89–Thr91, and Ala115–Phe118 each bind NAD(+). The Proton donor/acceptor role is filled by His145. His146 contributes to the (S)-2,3,4,5-tetrahydrodipicolinate binding site. Lys149 acts as the Proton donor in catalysis. Residue Gly155 to Thr156 coordinates (S)-2,3,4,5-tetrahydrodipicolinate.

The protein belongs to the DapB family.

It localises to the cytoplasm. The enzyme catalyses (S)-2,3,4,5-tetrahydrodipicolinate + NAD(+) + H2O = (2S,4S)-4-hydroxy-2,3,4,5-tetrahydrodipicolinate + NADH + H(+). The catalysed reaction is (S)-2,3,4,5-tetrahydrodipicolinate + NADP(+) + H2O = (2S,4S)-4-hydroxy-2,3,4,5-tetrahydrodipicolinate + NADPH + H(+). The protein operates within amino-acid biosynthesis; L-lysine biosynthesis via DAP pathway; (S)-tetrahydrodipicolinate from L-aspartate: step 4/4. Its function is as follows. Catalyzes the conversion of 4-hydroxy-tetrahydrodipicolinate (HTPA) to tetrahydrodipicolinate. The chain is 4-hydroxy-tetrahydrodipicolinate reductase from Streptococcus pneumoniae serotype 19F (strain G54).